An 81-amino-acid chain; its full sequence is Photosystem I iron-sulfur center (81 aa).

2 consecutive 4Fe-4S ferredoxin-type domains span residues 2-31 (SHSV…MVPW) and 37-68 (GQIA…VRVY). [4Fe-4S] cluster is bound by residues C11, C14, C17, C21, C48, C51, C54, and C58.

In terms of assembly, the eukaryotic PSI reaction center is composed of at least 11 subunits. The cofactor is [4Fe-4S] cluster.

It localises to the plastid. The protein localises to the chloroplast thylakoid membrane. The enzyme catalyses reduced [plastocyanin] + hnu + oxidized [2Fe-2S]-[ferredoxin] = oxidized [plastocyanin] + reduced [2Fe-2S]-[ferredoxin]. Apoprotein for the two 4Fe-4S centers FA and FB of photosystem I (PSI); essential for photochemical activity. FB is the terminal electron acceptor of PSI, donating electrons to ferredoxin. The C-terminus interacts with PsaA/B/D and helps assemble the protein into the PSI complex. Required for binding of PsaD and PsaE to PSI. PSI is a plastocyanin/cytochrome c6-ferredoxin oxidoreductase, converting photonic excitation into a charge separation, which transfers an electron from the donor P700 chlorophyll pair to the spectroscopically characterized acceptors A0, A1, FX, FA and FB in turn. The protein is Photosystem I iron-sulfur center of Euglena gracilis.